The following is a 131-amino-acid chain: Small ribosomal subunit protein bS6 (131 aa).

A disordered region spans residues Val96–Glu131. Positions Lys104 to Phe116 are enriched in basic and acidic residues. The segment covering Thr120–Glu131 has biased composition (acidic residues).

This sequence belongs to the bacterial ribosomal protein bS6 family.

Functionally, binds together with bS18 to 16S ribosomal RNA. The polypeptide is Small ribosomal subunit protein bS6 (Salmonella arizonae (strain ATCC BAA-731 / CDC346-86 / RSK2980)).